The following is a 402-amino-acid chain: UDP-N-acetylmuramoylalanine--D-glutamate ligase (402 aa).

An ATP-binding site is contributed by Gly97–Thr103.

This sequence belongs to the MurCDEF family.

The protein localises to the cytoplasm. It catalyses the reaction UDP-N-acetyl-alpha-D-muramoyl-L-alanine + D-glutamate + ATP = UDP-N-acetyl-alpha-D-muramoyl-L-alanyl-D-glutamate + ADP + phosphate + H(+). It functions in the pathway cell wall biogenesis; peptidoglycan biosynthesis. Its function is as follows. Cell wall formation. Catalyzes the addition of glutamate to the nucleotide precursor UDP-N-acetylmuramoyl-L-alanine (UMA). The sequence is that of UDP-N-acetylmuramoylalanine--D-glutamate ligase from Campylobacter jejuni subsp. jejuni serotype O:6 (strain 81116 / NCTC 11828).